Here is a 142-residue protein sequence, read N- to C-terminus: MRLSDQFNNTTSSSDFFFSQLGDESSFDDNWNIWNSTLTQDLTVTGCQSVNNWSSFLRSRFQVLVSLVFWDQCPQFVQVQDWLPEMSLLLVEVSHTNLTEITWMVFIHVNSVVMLTTGHTSTTGVLSVLTDTTFTGCTKKIL.

This is an uncharacterized protein from Saccharomyces cerevisiae (strain ATCC 204508 / S288c) (Baker's yeast).